Consider the following 513-residue polypeptide: Bifunctional pantoate ligase/cytidylate kinase (513 aa).

The segment at 1–283 (MVQVFRTIAG…VGSTRLIDNL (283 aa)) is pantoate--beta-alanine ligase. Residue 30–37 (MGSLHAGH) participates in ATP binding. The active-site Proton donor is the His37. Gln61 serves as a coordination point for (R)-pantoate. A beta-alanine-binding site is contributed by Gln61. 150 to 153 (GAKD) serves as a coordination point for ATP. Gln156 is a (R)-pantoate binding site. ATP contacts are provided by residues Val179 and 187-190 (MSSR). The tract at residues 284-513 (VLNHRLPIIA…IELYKKYNKG (230 aa)) is cytidylate kinase.

It in the N-terminal section; belongs to the pantothenate synthetase family. The protein in the C-terminal section; belongs to the cytidylate kinase family. Type 1 subfamily.

It localises to the cytoplasm. It catalyses the reaction (R)-pantoate + beta-alanine + ATP = (R)-pantothenate + AMP + diphosphate + H(+). It carries out the reaction CMP + ATP = CDP + ADP. The catalysed reaction is dCMP + ATP = dCDP + ADP. The protein operates within cofactor biosynthesis; (R)-pantothenate biosynthesis; (R)-pantothenate from (R)-pantoate and beta-alanine: step 1/1. In terms of biological role, catalyzes the condensation of pantoate with beta-alanine in an ATP-dependent reaction via a pantoyl-adenylate intermediate. Functionally, catalyzes the transfer of a phosphate group from ATP to either CMP or dCMP to form CDP or dCDP and ADP, respectively. This Synechocystis sp. (strain ATCC 27184 / PCC 6803 / Kazusa) protein is Bifunctional pantoate ligase/cytidylate kinase.